The sequence spans 409 residues: Argininosuccinate synthase (409 aa).

ATP is bound by residues 12–20 and Ala39; that span reads AYSGGLDTS. 2 residues coordinate L-citrulline: Tyr90 and Ser95. Gly120 serves as a coordination point for ATP. 3 residues coordinate L-aspartate: Thr122, Asn126, and Asp127. Asn126 contributes to the L-citrulline binding site. The L-citrulline site is built by Arg130, Ser181, Ser190, Glu266, and Tyr278.

It belongs to the argininosuccinate synthase family. Type 1 subfamily. Homotetramer.

It localises to the cytoplasm. The catalysed reaction is L-citrulline + L-aspartate + ATP = 2-(N(omega)-L-arginino)succinate + AMP + diphosphate + H(+). Its pathway is amino-acid biosynthesis; L-arginine biosynthesis; L-arginine from L-ornithine and carbamoyl phosphate: step 2/3. The sequence is that of Argininosuccinate synthase from Acidiphilium cryptum (strain JF-5).